The chain runs to 202 residues: Imidazoleglycerol-phosphate dehydratase (202 aa).

Belongs to the imidazoleglycerol-phosphate dehydratase family.

It is found in the cytoplasm. It carries out the reaction D-erythro-1-(imidazol-4-yl)glycerol 3-phosphate = 3-(imidazol-4-yl)-2-oxopropyl phosphate + H2O. Its pathway is amino-acid biosynthesis; L-histidine biosynthesis; L-histidine from 5-phospho-alpha-D-ribose 1-diphosphate: step 6/9. The polypeptide is Imidazoleglycerol-phosphate dehydratase (Sinorhizobium medicae (strain WSM419) (Ensifer medicae)).